A 780-amino-acid chain; its full sequence is LPS-assembly protein LptD (780 aa).

Residues 1-24 (MKKRFPTLLATLIWTALYSQHTLA) form the signal peptide.

This sequence belongs to the LptD family. As to quaternary structure, component of the lipopolysaccharide transport and assembly complex. Interacts with LptE and LptA.

It is found in the cell outer membrane. In terms of biological role, together with LptE, is involved in the assembly of lipopolysaccharide (LPS) at the surface of the outer membrane. The chain is LPS-assembly protein LptD from Yersinia pestis bv. Antiqua (strain Antiqua).